Here is a 236-residue protein sequence, read N- to C-terminus: Large ribosomal subunit protein uL3 (236 aa).

Disordered stretches follow at residues 132-153 and 200-236; these read SNRA…GMAQ and KGGD…KKGG. The span at 133–145 shows a compositional bias: polar residues; it reads NRASHGNSRSHNV. N5-methylglutamine is present on glutamine 153. Residues 206-216 are compositionally biased toward polar residues; sequence VSPSIRSARPT. Over residues 217-228 the composition is skewed to low complexity; that stretch reads NNGNVNAAAKGG.

This sequence belongs to the universal ribosomal protein uL3 family. As to quaternary structure, part of the 50S ribosomal subunit. Forms a cluster with proteins L14 and L19. In terms of processing, methylated by PrmB.

Functionally, one of the primary rRNA binding proteins, it binds directly near the 3'-end of the 23S rRNA, where it nucleates assembly of the 50S subunit. In Nitrosospira multiformis (strain ATCC 25196 / NCIMB 11849 / C 71), this protein is Large ribosomal subunit protein uL3.